We begin with the raw amino-acid sequence, 183 residues long: MGKFPLREQSIVLIGFMGVGKTTIGKTVAKKLYRDFIDIDEEIEKRFKMPTKDIFRLYGEKTFRNAEKDIISEICQQRLKVVSLGGGAFLQKEIQEICLNSSIIFYLDLSWDRWKDRIELLMESRPVLQGKTMKEMKQLYEDRKPIYEQHHSRVDTDYHEIEEVADYIAESLKLAWDIYEPTS.

18 to 23 is an ATP binding site; it reads GVGKTT. Residue Thr22 participates in Mg(2+) binding. The substrate site is built by Asp40, Arg64, and Gly86. Arg125 serves as a coordination point for ATP. A substrate-binding site is contributed by Arg143.

Belongs to the shikimate kinase family. Monomer. Mg(2+) serves as cofactor.

It localises to the cytoplasm. The enzyme catalyses shikimate + ATP = 3-phosphoshikimate + ADP + H(+). The protein operates within metabolic intermediate biosynthesis; chorismate biosynthesis; chorismate from D-erythrose 4-phosphate and phosphoenolpyruvate: step 5/7. Functionally, catalyzes the specific phosphorylation of the 3-hydroxyl group of shikimic acid using ATP as a cosubstrate. The chain is Shikimate kinase from Oceanobacillus iheyensis (strain DSM 14371 / CIP 107618 / JCM 11309 / KCTC 3954 / HTE831).